The sequence spans 199 residues: Large ribosomal subunit protein bL9 (199 aa).

Residues 169-199 (TGGFTEEYDPNAEPGEIPTELLEGGEEAAEA) form a disordered region.

The protein belongs to the bacterial ribosomal protein bL9 family.

In terms of biological role, binds to the 23S rRNA. The polypeptide is Large ribosomal subunit protein bL9 (Novosphingobium aromaticivorans (strain ATCC 700278 / DSM 12444 / CCUG 56034 / CIP 105152 / NBRC 16084 / F199)).